The sequence spans 132 residues: MVMTDPIADFLTRIRNANQAKHEVLEVPASNIKKGIAEILKREGFVKNVEIIEDDKQGVIRVFLKYGSNGEKVITNLKRVSKPGLRVYKKREDLPKVLNGLGIAILSTSEGLLTDKEARQKNVGGEVIAYVW.

It belongs to the universal ribosomal protein uS8 family. Part of the 30S ribosomal subunit. Contacts proteins S5 and S12.

Its function is as follows. One of the primary rRNA binding proteins, it binds directly to 16S rRNA central domain where it helps coordinate assembly of the platform of the 30S subunit. This is Small ribosomal subunit protein uS8 from Streptococcus pneumoniae serotype 19F (strain G54).